We begin with the raw amino-acid sequence, 753 residues long: Polyribonucleotide nucleotidyltransferase (753 aa).

The Mg(2+) site is built by D543 and D549. The region spanning 609-668 (PRITTVKIPVAKIGELIGPKGKNINALTEETGANISIEDDGTVFISAADGASAEAAIEKI) is the KH domain. The 70-residue stretch at 680-749 (GERFLGTVVK…NRGKISLVPV (70 aa)) folds into the S1 motif domain.

Belongs to the polyribonucleotide nucleotidyltransferase family. Mg(2+) serves as cofactor.

The protein resides in the cytoplasm. The enzyme catalyses RNA(n+1) + phosphate = RNA(n) + a ribonucleoside 5'-diphosphate. Its function is as follows. Involved in mRNA degradation. Catalyzes the phosphorolysis of single-stranded polyribonucleotides processively in the 3'- to 5'-direction. This is Polyribonucleotide nucleotidyltransferase from Corynebacterium glutamicum (strain R).